Reading from the N-terminus, the 352-residue chain is Aromatic amino acid aminotransferase (352 aa).

Lys-217 carries the N6-(pyridoxal phosphate)lysine modification.

This sequence belongs to the class-II pyridoxal-phosphate-dependent aminotransferase family. As to quaternary structure, homodimer. It depends on pyridoxal 5'-phosphate as a cofactor.

It carries out the reaction an aromatic L-alpha-amino acid + 2-oxoglutarate = an aromatic oxo-acid + L-glutamate. Its function is as follows. Aminotransferase that catalyzes the conversion of aromatic amino acids and 2-oxoglutarate into corresponding aromatic oxo acids and L-glutamate. The chain is Aromatic amino acid aminotransferase from Cutibacterium acnes (strain DSM 16379 / KPA171202) (Propionibacterium acnes).